We begin with the raw amino-acid sequence, 188 residues long: Acireductone dioxygenase (188 aa).

Positions 97, 99, 103, and 141 each coordinate Fe(2+). Residues histidine 97, histidine 99, glutamate 103, and histidine 141 each contribute to the Ni(2+) site.

It belongs to the acireductone dioxygenase (ARD) family. In terms of assembly, monomer. It depends on Fe(2+) as a cofactor. Requires Ni(2+) as cofactor.

The catalysed reaction is 1,2-dihydroxy-5-(methylsulfanyl)pent-1-en-3-one + O2 = 3-(methylsulfanyl)propanoate + CO + formate + 2 H(+). The enzyme catalyses 1,2-dihydroxy-5-(methylsulfanyl)pent-1-en-3-one + O2 = 4-methylsulfanyl-2-oxobutanoate + formate + 2 H(+). The protein operates within amino-acid biosynthesis; L-methionine biosynthesis via salvage pathway; L-methionine from S-methyl-5-thio-alpha-D-ribose 1-phosphate: step 5/6. In terms of biological role, catalyzes 2 different reactions between oxygen and the acireductone 1,2-dihydroxy-3-keto-5-methylthiopentene (DHK-MTPene) depending upon the metal bound in the active site. Fe-containing acireductone dioxygenase (Fe-ARD) produces formate and 2-keto-4-methylthiobutyrate (KMTB), the alpha-ketoacid precursor of methionine in the methionine recycle pathway. Ni-containing acireductone dioxygenase (Ni-ARD) produces methylthiopropionate, carbon monoxide and formate, and does not lie on the methionine recycle pathway. The polypeptide is Acireductone dioxygenase (Gluconobacter oxydans (strain 621H) (Gluconobacter suboxydans)).